The sequence spans 379 residues: Cobalt-precorrin-5B C(1)-methyltransferase (379 aa).

It belongs to the CbiD family.

The catalysed reaction is Co-precorrin-5B + S-adenosyl-L-methionine = Co-precorrin-6A + S-adenosyl-L-homocysteine. Its pathway is cofactor biosynthesis; adenosylcobalamin biosynthesis; cob(II)yrinate a,c-diamide from sirohydrochlorin (anaerobic route): step 6/10. Catalyzes the methylation of C-1 in cobalt-precorrin-5B to form cobalt-precorrin-6A. This Edwardsiella ictaluri (strain 93-146) protein is Cobalt-precorrin-5B C(1)-methyltransferase.